The primary structure comprises 283 residues: Acetylglutamate kinase (283 aa).

Substrate is bound by residues 64 to 65 (GG), arginine 86, and asparagine 179.

The protein belongs to the acetylglutamate kinase family. ArgB subfamily.

The protein resides in the cytoplasm. It catalyses the reaction N-acetyl-L-glutamate + ATP = N-acetyl-L-glutamyl 5-phosphate + ADP. Its pathway is amino-acid biosynthesis; L-arginine biosynthesis; N(2)-acetyl-L-ornithine from L-glutamate: step 2/4. Functionally, catalyzes the ATP-dependent phosphorylation of N-acetyl-L-glutamate. In Campylobacter hominis (strain ATCC BAA-381 / DSM 21671 / CCUG 45161 / LMG 19568 / NCTC 13146 / CH001A), this protein is Acetylglutamate kinase.